The chain runs to 40 residues: DCPSGWSSYEGHCYRVFNEPKNWADAERFCKLQPKHSHLV.

Cysteines 2 and 13 form a disulfide.

It belongs to the snaclec family. Dimer (non-covalently linked) of heterodimers of subunits alpha and beta (disulfide-linked). As to expression, expressed by the venom gland.

The protein resides in the secreted. Its function is as follows. Interferes with one step of hemostasis (modulation of platelet aggregation, or coagulation cascade, for example). In Lachesis muta rhombeata (Bushmaster), this protein is Snaclec LmrLEC-1.